Reading from the N-terminus, the 276-residue chain is Insulin-induced gene 1 protein (276 aa).

Disordered regions lie at residues 1-26 (MPRL…PRAS) and 49-73 (AAHG…QGSS). Residues 1 to 83 (MPRLDDHLWR…SHVNSWHHHL (83 aa)) are Cytoplasmic-facing. The span at 16 to 25 (GTKHRSHPRA) shows a compositional bias: basic residues. The helical transmembrane segment at 84-106 (VQRSLVLFSVGVVLALVLNLLQV) threads the bilayer. The Extracellular segment spans residues 107–125 (QRNVTLFPDEVIATIFSSA). The helical transmembrane segment at 126–143 (WWVPPCCGTAAAVVGLLY) threads the bilayer. Topologically, residues 144–158 (PCIDSHLGEPHKFKR) are cytoplasmic. Residues Lys-155 and Lys-157 each participate in a glycyl lysine isopeptide (Lys-Gly) (interchain with G-Cter in ubiquitin) cross-link. Residues 159 to 181 (EWASVMRCVAVFVGINHASAKLD) form a helical membrane-spanning segment. At 182 to 184 (FAN) the chain is on the extracellular side. The helical transmembrane segment at 185–203 (NVQLSLTLAALSLGLWWTF) threads the bilayer. At 204 to 208 (DRSRS) the chain is on the cytoplasmic side. Ser-206 is modified (phosphoserine). The helical transmembrane segment at 209–230 (GLGLGITIAFLATLITQLLVYN) threads the bilayer. Residues 231-244 (GVYQYTSPDFLYIR) are Extracellular-facing. Residues 245-262 (SWLPCIFFSGGVTVGNIG) traverse the membrane as a helical segment. Residues 263–276 (RQLAMGVPEKPHSD) are Cytoplasmic-facing. The KxHxx motif lies at 270 to 276 (PEKPHSD).

It belongs to the INSIG family. As to quaternary structure, interacts with SCAP; interaction is direct and only takes place in the presence of sterols; it prevents interaction between SCAP and the coat protein complex II (COPII). Associates with the SCAP-SREBP complex (composed of SCAP and SREBF1/SREBP1 or SREBF2/SREBP2); association is mediated via its interaction with SCAP and only takes place in the presence of sterols. Interaction with SCAP is mutually exclusive with PAQR3. Interacts with HMGCR (via its SSD); the interaction, accelerated by sterols, leads to the recruitment of HMGCR to AMFR/gp78 for its ubiquitination by the sterol-mediated ERAD pathway. Interacts with AMFR/gp78 (via its membrane domain); the interaction recruits HMCR at the ER membrane for its ubiquitination and degradation by the sterol-mediated ERAD pathway. Interacts with SOAT2/ACAT2; leading to promote recruitment of AMFR/gp78 and subsequent ubiquitination of SOAT2/ACAT2. Interacts with RNF139. Interacts with RNF145. Post-translationally, phosphorylation at Ser-206 by PCK1 reduces binding to oxysterol, disrupting the interaction between INSIG1 and SCAP, thereby promoting nuclear translocation of SREBP proteins (SREBF1/SREBP1 or SREBF2/SREBP2) and subsequent transcription of downstream lipogenesis-related genes. In terms of processing, ubiquitinated by AMFR/gp78 in response to sterol deprivation, leading to its degradation: when the SCAP-SREBP complex becomes dissociated from INSIG1, INSIG1 is then ubiquitinated and degraded in proteasomes. Although ubiquitination is required for rapid INSIG1 degradation, it is not required for release of the SCAP-SREBP complex. Ubiquitinated by RNF139.

It localises to the endoplasmic reticulum membrane. In terms of biological role, oxysterol-binding protein that mediates feedback control of cholesterol synthesis by controlling both endoplasmic reticulum to Golgi transport of SCAP and degradation of HMGCR. Acts as a negative regulator of cholesterol biosynthesis by mediating the retention of the SCAP-SREBP complex in the endoplasmic reticulum, thereby blocking the processing of sterol regulatory element-binding proteins (SREBPs) SREBF1/SREBP1 and SREBF2/SREBP2. Binds oxysterol, including 25-hydroxycholesterol, regulating interaction with SCAP and retention of the SCAP-SREBP complex in the endoplasmic reticulum. In presence of oxysterol, interacts with SCAP, retaining the SCAP-SREBP complex in the endoplasmic reticulum, thereby preventing SCAP from escorting SREBF1/SREBP1 and SREBF2/SREBP2 to the Golgi. Sterol deprivation or phosphorylation by PCK1 reduce oxysterol-binding, disrupting the interaction between INSIG1 and SCAP, thereby promoting Golgi transport of the SCAP-SREBP complex, followed by processing and nuclear translocation of SREBF1/SREBP1 and SREBF2/SREBP2. Also regulates cholesterol synthesis by regulating degradation of HMGCR: initiates the sterol-mediated ubiquitin-mediated endoplasmic reticulum-associated degradation (ERAD) of HMGCR via recruitment of the reductase to the ubiquitin ligases AMFR/gp78 and/or RNF139. Also regulates degradation of SOAT2/ACAT2 when the lipid levels are low: initiates the ubiquitin-mediated degradation of SOAT2/ACAT2 via recruitment of the ubiquitin ligases AMFR/gp78. The chain is Insulin-induced gene 1 protein from Bos taurus (Bovine).